Consider the following 504-residue polypeptide: Maturase K (504 aa).

Belongs to the intron maturase 2 family. MatK subfamily.

It is found in the plastid. The protein localises to the chloroplast. Usually encoded in the trnK tRNA gene intron. Probably assists in splicing its own and other chloroplast group II introns. The protein is Maturase K of Thlaspi arvense (Field penny-cress).